The sequence spans 1906 residues: Zinc metalloprotease ZmpB (1906 aa).

The first 33 residues, 1–33, serve as a signal peptide directing secretion; the sequence is MFKKDRFSIRKIKGVVGSVFLGSLLMAPSVVDA. Positions 34–76 are excised as a propeptide; it reads ATYHYVNKEIISQEAKDLIQTGKPDRNEVVYGLVYQKDQLPQT. The LPXTG sorting signal motif lies at 73-77; sequence LPQTG. Residue Thr-76 is modified to Pentaglycyl murein peptidoglycan amidated threonine. Helical transmembrane passes span 77–98 and 105–127; these read GTEA…LLIY and SVFL…DPVA. Topologically, residues 128-1906 are extracellular; it reads TLALASREGV…TNSFKTSIFK (1779 aa). The tract at residues 178-436 is disordered; it reads VETPQSITNQ…KASSVSPTDY (259 aa). Residues 181–196 are compositionally biased toward polar residues; that stretch reads PQSITNQEQARTENQV. Basic and acidic residues-rich tracts occupy residues 201–239, 252–262, 271–335, 352–375, and 383–408; these read EAPK…KEDS, VESKPEEKVAV, KPAE…KEET, KQTE…REDE, and EPEK…DKIK. 4 consecutive repeat copies span residues 277-291, 293-315, 361-375, and 380-402. The interval 277–375 is 2 X 15 AA repeats of K-V-E-Q-A-G-E-P-V-A-P-R-E-D-E; it reads KVEQAGEPVA…GEPVAPREDE (99 aa). Residues 293 to 375 are 2 X 23 AA approximate repeats; that stretch reads APVEPEKQPE…GEPVAPREDE (83 aa). The span at 421–436 shows a compositional bias: polar residues; that stretch reads LNNQIDKASSVSPTDY. His-1562 contacts Zn(2+). Glu-1563 is an active-site residue. Positions 1566 and 1586 each coordinate Zn(2+).

This sequence belongs to the peptidase M26 family. The cofactor is Zn(2+). In terms of processing, the Gram-positive cell-wall anchor motif LPXTG is located in the N-terminal part, in contrast to such motifs in other known streptococcal and staphylococcal proteins. The protease could be cleaved by the sortase and anchored in the membrane via the two potential N-terminal transmembrane domains, whereas the propeptide located prior to the LPXTG motif would remain attached to the cell wall peptidoglycan by an amide bond.

Its subcellular location is the secreted. The protein localises to the cell wall. It localises to the membrane. Is a virulence factor capable of inducing inflammation in the lower respiratory tract, by increasing tumor necrosis factor alpha (TNF-alpha) concentration in the lungs. Also appears to have other functions important in virulence in models of pneumonia and septicemia. This chain is Zinc metalloprotease ZmpB (zmpB), found in Streptococcus pneumoniae serotype 4 (strain ATCC BAA-334 / TIGR4).